We begin with the raw amino-acid sequence, 570 residues long: Sulfite reductase [NADPH] hemoprotein beta-component (570 aa).

[4Fe-4S] cluster is bound by residues Cys434, Cys440, Cys479, and Cys483. A siroheme-binding site is contributed by Cys483.

Belongs to the nitrite and sulfite reductase 4Fe-4S domain family. As to quaternary structure, alpha(8)-beta(8). The alpha component is a flavoprotein, the beta component is a hemoprotein. It depends on siroheme as a cofactor. [4Fe-4S] cluster serves as cofactor.

The catalysed reaction is hydrogen sulfide + 3 NADP(+) + 3 H2O = sulfite + 3 NADPH + 4 H(+). It functions in the pathway sulfur metabolism; hydrogen sulfide biosynthesis; hydrogen sulfide from sulfite (NADPH route): step 1/1. Component of the sulfite reductase complex that catalyzes the 6-electron reduction of sulfite to sulfide. This is one of several activities required for the biosynthesis of L-cysteine from sulfate. The chain is Sulfite reductase [NADPH] hemoprotein beta-component from Salmonella typhi.